Here is a 98-residue protein sequence, read N- to C-terminus: Integration host factor subunit beta (98 aa).

The protein belongs to the bacterial histone-like protein family. Heterodimer of an alpha and a beta chain.

In terms of biological role, this protein is one of the two subunits of integration host factor, a specific DNA-binding protein that functions in genetic recombination as well as in transcriptional and translational control. In Pseudomonas putida (strain W619), this protein is Integration host factor subunit beta.